We begin with the raw amino-acid sequence, 69 residues long: Putative membrane protein insertion efficiency factor (69 aa).

The protein belongs to the UPF0161 family.

Its subcellular location is the cell membrane. Could be involved in insertion of integral membrane proteins into the membrane. This Thermoanaerobacter pseudethanolicus (strain ATCC 33223 / 39E) (Clostridium thermohydrosulfuricum) protein is Putative membrane protein insertion efficiency factor.